An 821-amino-acid chain; its full sequence is MNRGFFNMLGRRPFPAPTAMWRPRRRRQAAPMPARNGLASQIQQLTTAVSALVIGQATRPQPPRPRPPPRQKKQAPKQPPKPKKPKTQEKKKKQPAKPKPGKRQRMALKLEADRLFDVKNEDGDVIGHALAMEGKVMKPLHVKGTIDHPVLSKLKFTKSSAYDMEFAQLPVNMRSEAFTYTSEHPEGFYNWHHGAVQYSGGRFTIPRGVGGRGDSGRPIMDNSGRVVAIVLGGADEGTRTALSVVTWNSKGKTIKTTPEGTEEWSAAPLVTAMCLLGNVSFPCDRPPTCYTREPSRALDILEENVNHEAYDTLLNAILRCGSSGRSKRSVIDDFTLTSPYLGTCSYCHHTVPCFSPVKIEQVWDEADDNTIRIQTSAQFGYDQSGAASANKYRYMSLKQDHTVKEGTMDDIKISTSGPCRRLSYKGYFLLAKCPPGDSVTVSIVSSNSATSCTLARKIKPKFVGREKYDLPPVHGKKIPCTVYDRLKETTAGYITMHRPRPHAYTSYLEESSGKVYAKPPSGKNITYECKCGDYKTGTVSTRTEITGCTAIKQCVAYKSDQTKWVFNSPDLIRHDDHTAQGKLHLPFKLIPSTCMVPVAHAPNVIHGFKHISLQLDTDHLTLLTTRRLGANPEPTTEWIVGKTVRNFTVDRDGLEYIWGNHEPVRVYAQESAPGDPHGWPHEIVQHYYHRHPVYTILAVASATVAMMIGVTVAVLCACKARRECLTPYALAPNAVIPTSLALLCCVRSANAETFTETMSYLWSNSQPFFWVQLCIPLAAFIVLMRCCSCCLPFLSGCRRLPGEGRRLRTCDHCSKCATDTV.

The segment at M1–M106 is disordered. The span at L38 to V49 shows a compositional bias: polar residues. The segment covering P67–M106 has biased composition (basic residues). Residues K93–G101 form a ribosome-binding region. The Peptidase S3 domain maps to R114–W264. Catalysis depends on charge relay system residues H141, D163, and S215. The interval S265 to V279 is functions as an uncleaved signal peptide for the precursor of protein E3/E2. N-linked (GlcNAc...) asparagine; by host glycosylation is present at N278. Cysteines 283 and 289 form a disulfide. N-linked (GlcNAc...) asparagine; by host glycans are attached at residues N524 and N646. The chain crosses the membrane as a helical span at residues I696 to C716. 3 S-palmitoyl cysteine; by host lipidation sites follow: C724, C744, and C745. The next 2 helical transmembrane spans lie at T726–V746 and N764–M784.

The protein belongs to the alphavirus frameshifted structural polyprotein family. As to quaternary structure, homomultimer. Interacts with host karyopherin KPNA4; this interaction allows the nuclear import of the viral capsid protein. Interacts with spike glycoprotein E2. Interacts with host IRAK1; the interaction leads to inhibition of IRAK1-dependent signaling. In terms of assembly, the precursor of protein E3/E2 and E1 form a heterodimer shortly after synthesis. Processing of the precursor of protein E3/E2 into E2 and E3 results in a heterodimer of the spike glycoproteins E2 and E1. Spike at virion surface are constituted of three E2-E1 heterodimers. Post-translationally, specific enzymatic cleavages in vivo yield mature proteins. Capsid protein is auto-cleaved during polyprotein translation, unmasking a signal peptide at the N-terminus of the precursor of E3/E2. The remaining polyprotein is then targeted to the host endoplasmic reticulum, where host signal peptidase cleaves it into pE2 and TF. pE2 is further processed to mature E3 and E2 by host furin in trans-Golgi vesicle. Palmitoylated via thioester bonds. These palmitoylations may induce disruption of the C-terminus transmembrane. This would result in the reorientation of E2 C-terminus from lumenal to cytoplasmic side. In terms of processing, palmitoylated via thioester bonds.

The protein localises to the virion. It is found in the host cytoplasm. Its subcellular location is the host cell membrane. The protein resides in the host nucleus. It localises to the virion membrane. It catalyses the reaction Autocatalytic release of the core protein from the N-terminus of the togavirus structural polyprotein by hydrolysis of a -Trp-|-Ser- bond.. In terms of biological role, forms an icosahedral capsid with a T=4 symmetry composed of 240 copies of the capsid protein surrounded by a lipid membrane through which penetrate 80 spikes composed of trimers of E1-E2 heterodimers. The capsid protein binds to the viral RNA genome at a site adjacent to a ribosome binding site for viral genome translation following genome release. Possesses a protease activity that results in its autocatalytic cleavage from the nascent structural protein. Following its self-cleavage, the capsid protein transiently associates with ribosomes, and within several minutes the protein binds to viral RNA and rapidly assembles into icosahedric core particles. The resulting nucleocapsid eventually associates with the cytoplasmic domain of the spike glycoprotein E2 at the cell membrane, leading to budding and formation of mature virions. In case of infection, new virions attach to target cells and after clathrin-mediated endocytosis their membrane fuses with the host endosomal membrane. This leads to the release of the nucleocapsid into the cytoplasm, followed by an uncoating event necessary for the genomic RNA to become accessible. The uncoating might be triggered by the interaction of capsid proteins with ribosomes. Binding of ribosomes would release the genomic RNA since the same region is genomic RNA-binding and ribosome-binding. Specifically inhibits interleukin-1 receptor-associated kinase 1/IRAK1-dependent signaling during viral entry, representing a means by which the alphaviruses may evade innate immune detection and activation prior to viral gene expression. Provides the signal sequence for the translocation of the precursor of protein E3/E2 to the host endoplasmic reticulum. Furin-cleaved E3 remains associated with spike glycoprotein E1 and mediates pH protection of the latter during the transport via the secretory pathway. After virion release from the host cell, the assembly protein E3 is gradually released in the extracellular space. Functionally, plays an essential role in viral attachment to target host cell, by binding to the cell receptor. Synthesized as a pE2 precursor which is processed by furin at the cell membrane just before virion budding, giving rise to E2-E1 heterodimer. The pE2-E1 heterodimer is stable, whereas E2-E1 is unstable and dissociate at low pH. pE2 is processed at the last step, presumably to avoid E1 fusion activation before its final export to cell surface. E2 C-terminus contains a transitory transmembrane that would be disrupted by palmitoylation, resulting in reorientation of the C-terminal tail from lumenal to cytoplasmic side. This step is critical since E2 C-terminus is involved in budding by interacting with capsid proteins. This release of E2 C-terminus in cytoplasm occurs lately in protein export, and precludes premature assembly of particles at the endoplasmic reticulum membrane. Its function is as follows. Plays a role in viral assembly and release. In Sindbis virus (SINV), this protein is Frameshifted structural polyprotein.